Reading from the N-terminus, the 199-residue chain is GTP cyclohydrolase-2 (199 aa).

Residue 52 to 56 (RMHSE) coordinates GTP. Residues C57, C68, and C70 each coordinate Zn(2+). GTP-binding positions include Q73, 94–96 (EGR), and T116. The active-site Proton acceptor is D128. R130 serves as the catalytic Nucleophile. Residues T151 and K156 each contribute to the GTP site.

The protein belongs to the GTP cyclohydrolase II family. It depends on Zn(2+) as a cofactor.

It carries out the reaction GTP + 4 H2O = 2,5-diamino-6-hydroxy-4-(5-phosphoribosylamino)-pyrimidine + formate + 2 phosphate + 3 H(+). It functions in the pathway cofactor biosynthesis; riboflavin biosynthesis; 5-amino-6-(D-ribitylamino)uracil from GTP: step 1/4. In terms of biological role, catalyzes the conversion of GTP to 2,5-diamino-6-ribosylamino-4(3H)-pyrimidinone 5'-phosphate (DARP), formate and pyrophosphate. In Aliivibrio fischeri (strain MJ11) (Vibrio fischeri), this protein is GTP cyclohydrolase-2.